A 433-amino-acid polypeptide reads, in one-letter code: uncharacterized protein (433 aa).

The region spanning 61–178 (RFNHSLGVYE…QIDADRMDYL (118 aa)) is the HD domain.

This is an uncharacterized protein from Bacillus subtilis (strain 168).